Consider the following 285-residue polypeptide: Putative ABC transporter ATP-binding protein CPE0195 (285 aa).

Residues leucine 6 to arginine 242 form the ABC transporter domain. ATP is bound at residue glycine 39–serine 46.

Belongs to the ABC transporter superfamily.

Its subcellular location is the cell membrane. Its function is as follows. Probably part of an ABC transporter complex. Responsible for energy coupling to the transport system. This is Putative ABC transporter ATP-binding protein CPE0195 from Clostridium perfringens (strain 13 / Type A).